Reading from the N-terminus, the 222-residue chain is Sortase A (222 aa).

Topologically, residues 1-7 (MLKKTIA) are cytoplasmic. Residues 8-28 (IIILIIGLLLIFSPFIKNGIV) form a helical membrane-spanning segment. Topologically, residues 29–222 (KYMSGHETIE…ELENKYFPSK (194 aa)) are extracellular. Residue His127 is the Proton donor/acceptor of the active site. Cys188 functions as the Acyl-thioester intermediate in the catalytic mechanism.

It belongs to the bacterial sortase family. Class A subfamily.

The protein localises to the cell membrane. Its activity is regulated as follows. Activity is enhanced by Zn(2+) and strongly enhanced by Ca(2+). Inhibited by chalcone, a precursor of several flavonoids, which blocks the SrtA active site. In terms of biological role, transpeptidase that anchors surface proteins to the cell wall. Recognizes and modifies its substrate by proteolytic cleavage of a C-terminal sorting signal. Following cleavage, a covalent intermediate is formed via a thioester bond between the sortase and its substrate, which is then transferred and covalently attached to the cell wall. This sortase recognizes a Leu-Pro-x-Thr-Gly (LPXTG) motif, which is cleaved by the sortase between the threonine and glycine residues. Involved in pathogenesis. May regulate the rate of synthesis and/or the stability of a subset of LPXTG proteins. Not involved in cell wall-anchoring of Hbp2 (SvpA) or Hbp1. The polypeptide is Sortase A (Listeria monocytogenes serovar 1/2a (strain ATCC BAA-679 / EGD-e)).